Here is a 151-residue protein sequence, read N- to C-terminus: Large ribosomal subunit protein bL9 (151 aa).

This sequence belongs to the bacterial ribosomal protein bL9 family.

In terms of biological role, binds to the 23S rRNA. In Rhodococcus erythropolis (strain PR4 / NBRC 100887), this protein is Large ribosomal subunit protein bL9.